The following is a 244-amino-acid chain: Ferric aerobactin reductase IutB (244 aa).

[2Fe-2S] cluster contacts are provided by Cys-220, Cys-221, Cys-232, and Cys-235.

As to quaternary structure, monomer. It depends on [2Fe-2S] cluster as a cofactor.

It is found in the cytoplasm. It carries out the reaction 2 a Fe(II)-siderophore + NAD(+) + H(+) = 2 a Fe(III)-siderophore + NADH. It catalyses the reaction 2 a Fe(II)-siderophore + NADP(+) + H(+) = 2 a Fe(III)-siderophore + NADPH. In terms of biological role, ferric-siderophore reductase involved in iron removal from the siderophores after their transport into the cell. Acts as a major ferric-aerobactin reductase catalyzing the reduction of Fe(3+)-aerobactin, a citrate-hydroxamate siderophore produced by other bacteria. Catalyzes reduction of Fe(3+)-vulnibactin, a catecholate siderophore synthesized by V.vulnificus, in the absence of VuuB. Catalyzes reduction of ferrioxamine B and Fe(3+)-vibriobactin in vitro. No activity with Fe(3+)-enterobactin. Catalyzes reduction of ferric chelating compound Fe(3+)-nitrilotriacetic acid (NTA) in the presence of NADH, NADPH or reduced glutathione (GSH) as its electron donor in vitro. Also catalyzes reduction of ferric chelating compounds Fe(3+)-citrate and Fe(3+)-EDTA as well as non-complexed FeCl3 in the presence of GSH as its electron donor in vitro. Highest activity with Fe(3+)-NTA as electron acceptor and GSH as donor. The polypeptide is Ferric aerobactin reductase IutB (Vibrio vulnificus).